Consider the following 180-residue polypeptide: MALPLRTDTPLTLVPLSWLLGRWEGAGVLGHPARGDSDTRFGQVVEFGHDGRDFLTYTSTTWALDEDGSTTEPLDVETGYWRPQPVDLDTPAPAEGPRPVELEVLLAHPTGVVEVLVGTARGPRIDLSSDVVARTATAHEYTAGNRMYGMVEGDLLWALDVALEGHPLRSYASARLKRVS.

A GXWXGXG motif is present at residues 21-27; the sequence is GRWEGAG.

It belongs to the nitrobindin family.

The protein is Ferric nitrobindin-like protein of Kineococcus radiotolerans (strain ATCC BAA-149 / DSM 14245 / SRS30216).